The primary structure comprises 545 residues: Labda-7,13-dienyl diphosphate synthase (545 aa).

The short motif at 315 to 320 is the DXDDTA motif element; the sequence is DADDTA. An RXXDGSW motif motif is present at residues 444-450; it reads RRTDGSW. Positions 526 to 545 are disordered; it reads LPAPAPVPPGFDAARTGPAD.

It belongs to the terpene synthase family. Requires Mg(2+) as cofactor.

The catalysed reaction is (2E,6E,10E)-geranylgeranyl diphosphate = (13E)-labda-7,13-dien-15-yl diphosphate. Involved in the biosynthesis of the labdane-type bicyclic diterpene labda-7,13(16),14-triene. Catalyzes the conversion of geranylgeranyl diphosphate (GGDP) into labda-7,13(E)-dienyl diphosphate. The protein is Labda-7,13-dienyl diphosphate synthase of Streptomyces clavuligerus.